The sequence spans 159 residues: UPF0201 protein MK0399 (159 aa).

This sequence belongs to the UPF0201 family.

This Methanopyrus kandleri (strain AV19 / DSM 6324 / JCM 9639 / NBRC 100938) protein is UPF0201 protein MK0399.